The primary structure comprises 136 residues: Transcription antitermination protein NusB (136 aa).

Belongs to the NusB family.

In terms of biological role, involved in transcription antitermination. Required for transcription of ribosomal RNA (rRNA) genes. Binds specifically to the boxA antiterminator sequence of the ribosomal RNA (rrn) operons. In Salinispora tropica (strain ATCC BAA-916 / DSM 44818 / JCM 13857 / NBRC 105044 / CNB-440), this protein is Transcription antitermination protein NusB.